Reading from the N-terminus, the 610-residue chain is UvrABC system protein C (610 aa).

Positions 16 to 94 (HQPGVYRMYN…IKQYLPKYNV (79 aa)) constitute a GIY-YIG domain. Residues 204–239 (QQVLKQLIEKMEVASQQLRFEDAAKFRDQIQAIRRV) enclose the UVR domain.

The protein belongs to the UvrC family. In terms of assembly, interacts with UvrB in an incision complex.

It is found in the cytoplasm. Functionally, the UvrABC repair system catalyzes the recognition and processing of DNA lesions. UvrC both incises the 5' and 3' sides of the lesion. The N-terminal half is responsible for the 3' incision and the C-terminal half is responsible for the 5' incision. The polypeptide is UvrABC system protein C (Vibrio parahaemolyticus serotype O3:K6 (strain RIMD 2210633)).